Here is a 246-residue protein sequence, read N- to C-terminus: Phycocyanobilin:ferredoxin oxidoreductase (246 aa).

Belongs to the HY2 family.

It carries out the reaction (2R,3Z)-phycocyanobilin + 4 oxidized [2Fe-2S]-[ferredoxin] = biliverdin IXalpha + 4 reduced [2Fe-2S]-[ferredoxin] + 4 H(+). Its function is as follows. Catalyzes the four-electron reduction of biliverdin IX-alpha (2-electron reduction at both the A and D rings); the reaction proceeds via an isolatable 2-electron intermediate, 181,182-dihydrobiliverdin. This is Phycocyanobilin:ferredoxin oxidoreductase from Crocosphaera subtropica (strain ATCC 51142 / BH68) (Cyanothece sp. (strain ATCC 51142)).